The chain runs to 124 residues: Large ribosomal subunit protein bL12 (124 aa).

The span at methionine 102–glutamate 116 shows a compositional bias: basic and acidic residues. The interval methionine 102–lysine 124 is disordered.

Belongs to the bacterial ribosomal protein bL12 family. In terms of assembly, homodimer. Part of the ribosomal stalk of the 50S ribosomal subunit. Forms a multimeric L10(L12)X complex, where L10 forms an elongated spine to which 2 to 4 L12 dimers bind in a sequential fashion. Binds GTP-bound translation factors.

Functionally, forms part of the ribosomal stalk which helps the ribosome interact with GTP-bound translation factors. Is thus essential for accurate translation. The chain is Large ribosomal subunit protein bL12 from Chromohalobacter salexigens (strain ATCC BAA-138 / DSM 3043 / CIP 106854 / NCIMB 13768 / 1H11).